Here is a 90-residue protein sequence, read N- to C-terminus: DNA-binding protein HU-beta (90 aa).

The protein belongs to the bacterial histone-like protein family. Heterodimer of an alpha and a beta chain.

Histone-like DNA-binding protein which is capable of wrapping DNA to stabilize it, and thus to prevent its denaturation under extreme environmental conditions. The sequence is that of DNA-binding protein HU-beta (hupB) from Serratia marcescens.